The chain runs to 136 residues: Putative pre-16S rRNA nuclease (136 aa).

It belongs to the YqgF nuclease family.

It is found in the cytoplasm. In terms of biological role, could be a nuclease involved in processing of the 5'-end of pre-16S rRNA. In Francisella philomiragia subsp. philomiragia (strain ATCC 25017 / CCUG 19701 / FSC 153 / O#319-036), this protein is Putative pre-16S rRNA nuclease.